A 29-amino-acid polypeptide reads, in one-letter code: Prolamin alpha-1 (29 aa).

This Dactylis glomerata (Orchard grass) protein is Prolamin alpha-1.